We begin with the raw amino-acid sequence, 790 residues long: Serine/threonine-protein kinase DCLK3 (790 aa).

The disordered stretch occupies residues 1–37 (MPAAPVLRPPPPPATPAPPAPSRPAPPIPGHRGPCDH). Over residues 7–29 (LRPPPPPATPAPPAPSRPAPPIP) the composition is skewed to pro residues. In terms of domain architecture, Doublecortin spans 97-183 (RVVTVVKLGG…KEPLTLKSIQ (87 aa)). Residues 201–218 (HSRVPSPRLRSRLPSKLL) show a composition bias toward low complexity. Disordered regions lie at residues 201-290 (HSRV…SGEK) and 315-506 (LQLG…KGII). Basic and acidic residues-rich tracts occupy residues 332 to 345 (DLGRAQKRDSEKLV), 352 to 400 (RPSE…ESQD), 425 to 434 (IDMRREDRHT), and 457 to 496 (TRGEEKQAEHEKKPGGLGERRAPEKESKRKLEEKRPERPS). In terms of domain architecture, Protein kinase spans 514-771 (YDIGGVIGDG…AEQVLQHPWI (258 aa)). ATP is bound by residues 520 to 528 (IGDGNFATV) and Lys543. The Proton acceptor role is filled by Asp635.

Belongs to the protein kinase superfamily. CAMK Ser/Thr protein kinase family. CaMK subfamily. As to expression, highly expressed in brain and to a lower extent in liver and kidney.

The protein resides in the cytoplasm. The protein localises to the nucleus. It carries out the reaction L-seryl-[protein] + ATP = O-phospho-L-seryl-[protein] + ADP + H(+). It catalyses the reaction L-threonyl-[protein] + ATP = O-phospho-L-threonyl-[protein] + ADP + H(+). The polypeptide is Serine/threonine-protein kinase DCLK3 (Dclk3) (Mus musculus (Mouse)).